The following is a 416-amino-acid chain: Cysteate synthase (416 aa).

Lysine 104 is subject to N6-(pyridoxal phosphate)lysine. Asparagine 130 provides a ligand contact to pyridoxal 5'-phosphate.

This sequence belongs to the threonine synthase family. Cysteate synthase subfamily. As to quaternary structure, homotrimer. Pyridoxal 5'-phosphate is required as a cofactor.

It carries out the reaction O-phospho-L-serine + sulfite + H(+) = L-cysteate + phosphate. The protein operates within cofactor biosynthesis; coenzyme M biosynthesis. Specifically catalyzes the beta-elimination of phosphate from L-phosphoserine and the beta-addition of sulfite to the dehydroalanine intermediate to produce L-cysteate. This is Cysteate synthase from Methanosarcina barkeri (strain Fusaro / DSM 804).